The following is a 372-amino-acid chain: Aryl-hydrocarbon-interacting protein-like 1 (372 aa).

In terms of domain architecture, PPIase FKBP-type spans 53–145 (REVGQPMHII…DLDELQKEPQ (93 aa)). TPR repeat units follow at residues 178 to 211 (VPVL…LRNL), 230 to 263 (NTLI…HPGI), and 264 to 297 (VKAY…EPSM). The tract at residues 325–372 (NMLSQGATWSPAEPPAEPPAESSTEPPAEPPAEPPAELTLTPGHPLQH) is disordered.

In terms of assembly, interacts with NUB1.

The protein resides in the cytoplasm. It localises to the nucleus. Functionally, may be important in protein trafficking and/or protein folding and stabilization. This is Aryl-hydrocarbon-interacting protein-like 1 (AIPL1) from Saimiri boliviensis boliviensis (Bolivian squirrel monkey).